The chain runs to 461 residues: MAVSLWQQCIARLQDELSAQQFSMWIRPLQAEMEGDTLVIYAPNRFVLDWVRDKYLNIINQFFTEQMGSDAPSLRFDIGSRPSAKPVVQATAAVRTSRPVTREVTKPSFNTPHAEPMANANHRSNINPTYQFDNFVEGKSNQLGKAAALQVAENPGGAYNPLFLYGGTGLGKTHLLHAVGNGIIKNNPNAKVVYMHSERFVQDMVKALQNNAIEEFKRYYRSVDALFIDDIQFFANKDRSQEEFFHTFNALLEGNHQIILTSDKYPKEIDGVEDRLKSRFGWGLTVAIEPPELETRVAILMRKAQESGINLPDEVAFFIAKRLRSNVRELEGALNRVIANANFTGRPITIDFVREALRDLLALQEKLVTIDNIQKTVAEYYKIKMADMLSKRRSRSVARPRQMAMALSKELTNQSLPEIGDAFGGRDHTTVLHACRKIAQLREESHDIKEDYANLIRTLSS.

The domain I, interacts with DnaA modulators stretch occupies residues methionine 1 to valine 87. Residues valine 87–serine 124 form a domain II region. Residues proline 99 to asparagine 125 form a disordered region. Residues asparagine 125 to alanine 341 form a domain III, AAA+ region region. ATP contacts are provided by glycine 169, glycine 171, lysine 172, and threonine 173. The domain IV, binds dsDNA stretch occupies residues asparagine 342–serine 461.

Belongs to the DnaA family. As to quaternary structure, oligomerizes as a right-handed, spiral filament on DNA at oriC.

It is found in the cytoplasm. Functionally, plays an essential role in the initiation and regulation of chromosomal replication. ATP-DnaA binds to the origin of replication (oriC) to initiate formation of the DNA replication initiation complex once per cell cycle. Binds the DnaA box (a 9 base pair repeat at the origin) and separates the double-stranded (ds)DNA. Forms a right-handed helical filament on oriC DNA; dsDNA binds to the exterior of the filament while single-stranded (ss)DNA is stabiized in the filament's interior. The ATP-DnaA-oriC complex binds and stabilizes one strand of the AT-rich DNA unwinding element (DUE), permitting loading of DNA polymerase. After initiation quickly degrades to an ADP-DnaA complex that is not apt for DNA replication. Binds acidic phospholipids. This chain is Chromosomal replication initiator protein DnaA, found in Shewanella pealeana (strain ATCC 700345 / ANG-SQ1).